The chain runs to 461 residues: Putative transcription initiation factor IIB-like protein (461 aa).

Residues 113–142 (SESLENIQSENSENNDNFTDNNTKKSPTKS) form a disordered region. Residues 121–137 (SENSENNDNFTDNNTKK) show a composition bias toward low complexity. Residues 141-173 (KSRICSGCGSKGTLLEDQSSSVLVCSECGMIND) form a TFIIB-type zinc finger. Residues C145, C165, and C168 each contribute to the Zn(2+) site. 2 consecutive repeat copies span residues 246 to 327 (ISTI…EKKV) and 360 to 430 (IRRH…DVTI).

This sequence belongs to the TFIIB family.

The chain is Putative transcription initiation factor IIB-like protein from Acanthamoeba polyphaga mimivirus (APMV).